A 285-amino-acid chain; its full sequence is VQ motif-containing protein 20 (285 aa).

Positions 1–10 are enriched in basic and acidic residues; sequence MSSTYKDNHP. Positions 1–68 are disordered; it reads MSSTYKDNHP…PSPSSFSSAA (68 aa). Residues 11 to 23 show a composition bias toward basic residues; that stretch reads YHHHPHHHHHHPK. The short motif at 91–100 is the VQ element; it reads FMALVQKLTG. A disordered region spans residues 195–218; the sequence is YSAVAIPPQPPPHPPPPPPPPSMY. Residues 201-216 are compositionally biased toward pro residues; the sequence is PPQPPPHPPPPPPPPS.

The protein resides in the nucleus. In terms of biological role, may function as negative regulator of plant defense. The sequence is that of VQ motif-containing protein 20 from Arabidopsis thaliana (Mouse-ear cress).